The chain runs to 341 residues: GTPase Obg (341 aa).

Residues 1-159 enclose the Obg domain; the sequence is MKFLDQAKVY…RAIWLRLKLI (159 aa). Residues 160-327 enclose the OBG-type G domain; the sequence is ADAGLVGLPN…VLRAGAHIIE (168 aa). GTP contacts are provided by residues 166 to 173, 191 to 195, 212 to 215, 279 to 282, and 308 to 310; these read GLPNAGKS, FTTLH, DIPG, SQID, and SAV. Residues serine 173 and threonine 193 each contribute to the Mg(2+) site.

This sequence belongs to the TRAFAC class OBG-HflX-like GTPase superfamily. OBG GTPase family. Monomer. It depends on Mg(2+) as a cofactor.

It localises to the cytoplasm. In terms of biological role, an essential GTPase which binds GTP, GDP and possibly (p)ppGpp with moderate affinity, with high nucleotide exchange rates and a fairly low GTP hydrolysis rate. Plays a role in control of the cell cycle, stress response, ribosome biogenesis and in those bacteria that undergo differentiation, in morphogenesis control. This Bartonella tribocorum (strain CIP 105476 / IBS 506) protein is GTPase Obg.